Here is a 463-residue protein sequence, read N- to C-terminus: Argininosuccinate lyase (463 aa).

Belongs to the lyase 1 family. Argininosuccinate lyase subfamily.

The protein resides in the cytoplasm. The enzyme catalyses 2-(N(omega)-L-arginino)succinate = fumarate + L-arginine. The protein operates within amino-acid biosynthesis; L-arginine biosynthesis; L-arginine from L-ornithine and carbamoyl phosphate: step 3/3. The protein is Argininosuccinate lyase of Methylorubrum extorquens (strain CM4 / NCIMB 13688) (Methylobacterium extorquens).